Reading from the N-terminus, the 519-residue chain is Histidine--tRNA ligase (519 aa).

It belongs to the class-II aminoacyl-tRNA synthetase family. As to quaternary structure, homodimer.

Its subcellular location is the cytoplasm. The enzyme catalyses tRNA(His) + L-histidine + ATP = L-histidyl-tRNA(His) + AMP + diphosphate + H(+). The chain is Histidine--tRNA ligase from Roseobacter denitrificans (strain ATCC 33942 / OCh 114) (Erythrobacter sp. (strain OCh 114)).